The sequence spans 128 residues: CD59 glycoprotein (128 aa).

The N-terminal stretch at 1-25 (MGIQGGSVLFGLLLVLAVFCHSGNS) is a signal peptide. Residues 26-108 (LQCYSCPYPT…ALKNGGTTLS (83 aa)) form the UPAR/Ly6 domain. 5 cysteine pairs are disulfide-bonded: Cys28–Cys51, Cys31–Cys38, Cys44–Cys64, Cys70–Cys88, and Cys89–Cys94. Asn43 is a glycosylation site (N-linked (GlcNAc...) asparagine). A lipid anchor (GPI-anchor amidated asparagine) is attached at Asn102. The propeptide at 103–128 (GGTTLSKKTVLLLVIPFLVAAWSLHP) is removed in mature form.

As to quaternary structure, interacts with T-cell surface antigen CD2. N- and O-glycosylated.

It is found in the cell membrane. The protein localises to the secreted. Potent inhibitor of the complement membrane attack complex (MAC) action, which protects self-cells from damage during complement activation. Acts by binding to the beta-haipins of C8 (C8A and C8B) components of the assembling MAC, forming an intermolecular beta-sheet that prevents incorporation of the multiple copies of C9 required for complete formation of the osmolytic pore. The protein is CD59 glycoprotein of Aotus trivirgatus (Three-striped night monkey).